We begin with the raw amino-acid sequence, 314 residues long: Phospholipid phosphatase-related protein type 5 (314 aa).

The next 6 helical transmembrane spans lie at 5–25 (FSLT…VMLA), 61–81 (IPPV…IIVG), 120–140 (FLGI…AGQV), 194–214 (AALS…TIKA), 223–243 (VLCL…VAEY), and 250–270 (VIAG…CVVN).

The protein belongs to the PA-phosphatase related phosphoesterase family.

The protein resides in the cell membrane. Functionally, induces filopodia formation and promotes neurite growth. In Xenopus laevis (African clawed frog), this protein is Phospholipid phosphatase-related protein type 5.